Here is a 999-residue protein sequence, read N- to C-terminus: Helicase required for RNAi-mediated heterochromatin assembly 1 (999 aa).

Residues 61–90 are disordered; sequence EQIETSETSKTQDSEGNKVDKNLKENKSIR. The segment covering 70–88 has biased composition (basic and acidic residues); sequence KTQDSEGNKVDKNLKENKS. Ser94 carries the post-translational modification Phosphoserine. Basic and acidic residues predominate over residues 106-124; that stretch reads RNDITSGKNREFENEHHPA. The disordered stretch occupies residues 106–131; it reads RNDITSGKNREFENEHHPASDTSSWR. 393 to 400 is an ATP binding site; sequence GPPGTGKS.

As to quaternary structure, cid12, hrr1 and rdp1 interact forming the RNA-directed RNA polymerase complex (RDRC). The RDRC complex interacts with the RITS complex via interaction between ago1 and hrr1. Clr4 has a role in mediating this interaction.

It localises to the cytoplasm. The protein resides in the nucleus. The enzyme catalyses ATP + H2O = ADP + phosphate + H(+). Has a role in the RNA interference (RNAi) pathway which is important for heterochromatin formation and accurate chromosome segregation. A member of the RNA-directed RNA polymerase complex (RDRC) which is involved in the generation of small interfering RNAs (siRNAs) and mediate their association with the RNA-induced transcriptional silencing (RITS) complex. RITS acts as a priming complex for dsRNA synthesis at the site of non-coding centromeric RNA. The sequence is that of Helicase required for RNAi-mediated heterochromatin assembly 1 (hrr1) from Schizosaccharomyces pombe (strain 972 / ATCC 24843) (Fission yeast).